A 185-amino-acid polypeptide reads, in one-letter code: Small ribosomal subunit protein uS5 (185 aa).

Residues 18–81 (FVDKLVHINR…ESAKRALIRV (64 aa)) enclose the S5 DRBM domain.

Belongs to the universal ribosomal protein uS5 family. As to quaternary structure, part of the 30S ribosomal subunit. Contacts proteins S4 and S8.

Functionally, with S4 and S12 plays an important role in translational accuracy. Located at the back of the 30S subunit body where it stabilizes the conformation of the head with respect to the body. This Azorhizobium caulinodans (strain ATCC 43989 / DSM 5975 / JCM 20966 / LMG 6465 / NBRC 14845 / NCIMB 13405 / ORS 571) protein is Small ribosomal subunit protein uS5.